The primary structure comprises 577 residues: Secreted LysM effector Lys4 (577 aa).

An N-terminal signal peptide occupies residues 1-19; that stretch reads MRALTAAVLFVAGLTPVLA. Positions 38–85 constitute a LysM 1 domain; the sequence is AWYTIVKGDGCDTVEKKFKITPEQFFKWNPDVSTDCVKNFWVGNSYCV. Low complexity predominate over residues 96 to 121; it reads TSTTVKSSSTTQKTSSTSSKLSSSSK. The interval 96 to 135 is disordered; the sequence is TSTTVKSSSTTQKTSSTSSKLSSSSKPVNTTTTPYSTRNP. Over residues 122 to 135 the composition is skewed to polar residues; sequence PVNTTTTPYSTRNP. Asparagine 124, asparagine 140, asparagine 216, and asparagine 235 each carry an N-linked (GlcNAc...) asparagine glycan. LysM domains are found at residues 251–298, 328–375, and 408–455; these read NFYQ…YYCV, KWYQ…WYCV, and QYWL…YVCV. Residues 464–485 show a composition bias toward low complexity; the sequence is SGSTTTITGPPTKGSNPPTTTT. Residues 464 to 490 are disordered; it reads SGSTTTITGPPTKGSNPPTTTTSGGGG. The region spanning 510 to 558 is the LysM 5 domain; sequence FWFRGKDGASLFCADIAKDAGVSLPDFLKWNPGVGSNCESLWADTWYCV.

It belongs to the secreted LysM effector family.

Functionally, might have a role in sequestration of chitin oligosaccharides (breakdown products of fungal cell walls that are released during invasion and act as triggers of host immunity) to dampen host defense. This Pochonia chlamydosporia (strain 123) (Metacordyceps chlamydosporia) protein is Secreted LysM effector Lys4.